The primary structure comprises 721 residues: Polyribonucleotide nucleotidyltransferase (721 aa).

Asp495 and Asp501 together coordinate Mg(2+). In terms of domain architecture, KH spans 562-621 (PRITTIKIRPERIKDIIGPGGKTIKDITARTGTSINIEDDGSVSIASPNQDKVEEAIKMI). One can recognise an S1 motif domain in the interval 631 to 699 (GRIYLGTVRK…RSGKIRLSRK (69 aa)). Positions 699 to 721 (KEALADSAKKSEGTEPPKGEPAK) are disordered.

It belongs to the polyribonucleotide nucleotidyltransferase family. The cofactor is Mg(2+).

It is found in the cytoplasm. It carries out the reaction RNA(n+1) + phosphate = RNA(n) + a ribonucleoside 5'-diphosphate. Its function is as follows. Involved in mRNA degradation. Catalyzes the phosphorolysis of single-stranded polyribonucleotides processively in the 3'- to 5'-direction. The protein is Polyribonucleotide nucleotidyltransferase of Anaeromyxobacter sp. (strain K).